An 81-amino-acid polypeptide reads, in one-letter code: Exodeoxyribonuclease 7 small subunit (81 aa).

Residues Leu60–Leu70 show a composition bias toward basic and acidic residues. The tract at residues Leu60 to Glu81 is disordered.

This sequence belongs to the XseB family. Heterooligomer composed of large and small subunits.

The protein localises to the cytoplasm. It catalyses the reaction Exonucleolytic cleavage in either 5'- to 3'- or 3'- to 5'-direction to yield nucleoside 5'-phosphates.. Functionally, bidirectionally degrades single-stranded DNA into large acid-insoluble oligonucleotides, which are then degraded further into small acid-soluble oligonucleotides. The polypeptide is Exodeoxyribonuclease 7 small subunit (Lactobacillus johnsonii (strain CNCM I-12250 / La1 / NCC 533)).